A 150-amino-acid polypeptide reads, in one-letter code: Large ribosomal subunit protein uL13 (150 aa).

This sequence belongs to the universal ribosomal protein uL13 family. Part of the 50S ribosomal subunit.

Functionally, this protein is one of the early assembly proteins of the 50S ribosomal subunit, although it is not seen to bind rRNA by itself. It is important during the early stages of 50S assembly. In Chlorobium phaeobacteroides (strain BS1), this protein is Large ribosomal subunit protein uL13.